The chain runs to 273 residues: Sulfur carrier protein FdhD (273 aa).

The active-site Cysteine persulfide intermediate is the Cys-124. Residue 263–268 coordinates Mo-bis(molybdopterin guanine dinucleotide); the sequence is FCRQSR.

Belongs to the FdhD family.

It localises to the cytoplasm. In terms of biological role, required for formate dehydrogenase (FDH) activity. Acts as a sulfur carrier protein that transfers sulfur from IscS to the molybdenum cofactor prior to its insertion into FDH. The chain is Sulfur carrier protein FdhD from Acinetobacter baylyi (strain ATCC 33305 / BD413 / ADP1).